An 858-amino-acid chain; its full sequence is Transcription factor pytR (858 aa).

Residues 1-35 form a disordered region; sequence MAHFSRVASDPSLAPQPSAPSGLDSSTTSSSSTGL. The segment at residues 39–65 is a DNA-binding region (zn(2)-C6 fungal-type); that stretch reads CTFCRARKIRCSSGPICSACRERNINC. A disordered region spans residues 72 to 99; sequence RKGRPRRRGTNTSNAQAKKGDQENPTLG.

The protein resides in the nucleus. In terms of biological role, transcription factor that regulates the expression of the gene cluster that mediates the biosynthesis of Pyranterreones, a family of antioxidative compounds. This Aspergillus terreus (strain NIH 2624 / FGSC A1156) protein is Transcription factor pytR.